We begin with the raw amino-acid sequence, 175 residues long: Sec-independent protein translocase protein TatB (175 aa).

A helical transmembrane segment spans residues 1 to 21; sequence MLDLGLSKMALIGVVALVVLG. Positions 99–115 are enriched in low complexity; sequence GDPAAADASGGLGATSD. A disordered region spans residues 99–118; sequence GDPAAADASGGLGATSDEPS.

This sequence belongs to the TatB family. As to quaternary structure, the Tat system comprises two distinct complexes: a TatABC complex, containing multiple copies of TatA, TatB and TatC subunits, and a separate TatA complex, containing only TatA subunits. Substrates initially bind to the TatABC complex, which probably triggers association of the separate TatA complex to form the active translocon.

Its subcellular location is the cell inner membrane. In terms of biological role, part of the twin-arginine translocation (Tat) system that transports large folded proteins containing a characteristic twin-arginine motif in their signal peptide across membranes. Together with TatC, TatB is part of a receptor directly interacting with Tat signal peptides. TatB may form an oligomeric binding site that transiently accommodates folded Tat precursor proteins before their translocation. This is Sec-independent protein translocase protein TatB from Burkholderia thailandensis (strain ATCC 700388 / DSM 13276 / CCUG 48851 / CIP 106301 / E264).